Consider the following 127-residue polypeptide: Spore germination protein 1 (127 aa).

Positions 1-25 are cleaved as a signal peptide; that stretch reads MNIKNSLILIISTIFVLSMINGGLT. Residues asparagine 54 and asparagine 118 are each glycosylated (N-linked (GlcNAc...) asparagine).

It belongs to the Dictyostelium gerABC family.

It is found in the secreted. The protein is Spore germination protein 1 (gerA) of Dictyostelium discoideum (Social amoeba).